Reading from the N-terminus, the 345-residue chain is Probable dual-specificity RNA methyltransferase RlmN (345 aa).

Glu-90 functions as the Proton acceptor in the catalytic mechanism. In terms of domain architecture, Radical SAM core spans 96 to 326 (YDYGNSICIS…STIRKEMGAD (231 aa)). An intrachain disulfide couples Cys-103 to Cys-331. Residues Cys-110, Cys-114, and Cys-117 each coordinate [4Fe-4S] cluster. Residues 157–158 (GE), Ser-189, 212–214 (SLH), and Asn-288 each bind S-adenosyl-L-methionine. Catalysis depends on Cys-331, which acts as the S-methylcysteine intermediate.

The protein belongs to the radical SAM superfamily. RlmN family. It depends on [4Fe-4S] cluster as a cofactor.

It localises to the cytoplasm. It carries out the reaction adenosine(2503) in 23S rRNA + 2 reduced [2Fe-2S]-[ferredoxin] + 2 S-adenosyl-L-methionine = 2-methyladenosine(2503) in 23S rRNA + 5'-deoxyadenosine + L-methionine + 2 oxidized [2Fe-2S]-[ferredoxin] + S-adenosyl-L-homocysteine. The enzyme catalyses adenosine(37) in tRNA + 2 reduced [2Fe-2S]-[ferredoxin] + 2 S-adenosyl-L-methionine = 2-methyladenosine(37) in tRNA + 5'-deoxyadenosine + L-methionine + 2 oxidized [2Fe-2S]-[ferredoxin] + S-adenosyl-L-homocysteine. Functionally, specifically methylates position 2 of adenine 2503 in 23S rRNA and position 2 of adenine 37 in tRNAs. In Clostridium acetobutylicum (strain ATCC 824 / DSM 792 / JCM 1419 / IAM 19013 / LMG 5710 / NBRC 13948 / NRRL B-527 / VKM B-1787 / 2291 / W), this protein is Probable dual-specificity RNA methyltransferase RlmN.